Here is a 369-residue protein sequence, read N- to C-terminus: MDLKFNNSRKYVSISVPSKTQAMSPHIKSVEDVVVLGVNLSKFSKLTQFLICVAGVFVFYLIYGYLQELIFSVEGFKPYGWYLTLVQFAFYSVFGLIELQLTQDRRRRIPGKTYMLIAFLTVGTMGLSNTSLGYLNYPTQVIFKCCKLIPVMLGGVFIQGKRYNLADVSAAVCMSLGLIWFTLADSTIAPNFNLTGVMLISLALCADAVIGNVQEKAMKLHNASNSEMVLYSYSIGFVYILLGLSCTSGLGPAVAFCSKNPVGTYGYAFLFSLTGYFGISFVLALIKIFGALLAVTVTTGRKAMTVVLSFLFFAKPFTFQYIWSGLLVVLGIFLNVYSKNMDKIRLPSVYNMIKKAMDMKKSRTLAQTV.

An N-linked (GlcNAc...) asparagine glycan is attached at Asn-39. The next 6 membrane-spanning stretches (helical) occupy residues 46-66 (LTQFLICVAGVFVFYLIYGYL), 79-99 (YGWYLTLVQFAFYSVFGLIEL), 115-135 (MLIAFLTVGTMGLSNTSLGYL), 138-158 (PTQVIFKCCKLIPVMLGGVFI), 168-188 (VSAAVCMSLGLIWFTLADSTI), and 191-211 (NFNLTGVMLISLALCADAVIG). Asn-222 carries an N-linked (GlcNAc...) asparagine glycan. 4 consecutive transmembrane segments (helical) span residues 235–255 (IGFVYILLGLSCTSGLGPAVA), 266–285 (GYAFLFSLTGYFGISFVLAL), 292–314 (LLAVTVTTGRKAMTVVLSFLFFA), and 317–337 (FTFQYIWSGLLVVLGIFLNVY).

The protein belongs to the nucleotide-sugar transporter family. SLC35B subfamily.

It is found in the golgi apparatus membrane. The catalysed reaction is 3'-phosphoadenylyl sulfate(in) + adenosine 3',5'-bisphosphate(out) = 3'-phosphoadenylyl sulfate(out) + adenosine 3',5'-bisphosphate(in). Functionally, probably functions as a 3'-phosphoadenylyl sulfate:adenosine 3',5'-bisphosphate antiporter at the Golgi membranes. Mediates the transport from the cytosol into the lumen of the Golgi of 3'-phosphoadenylyl sulfate/adenosine 3'-phospho 5'-phosphosulfate (PAPS), a universal sulfuryl donor for sulfation events that take place in that compartment. The chain is Adenosine 3'-phospho 5'-phosphosulfate transporter 2 from Mus musculus (Mouse).